The primary structure comprises 29 residues: Protein YldA (29 aa).

A helical transmembrane segment spans residues 5-25 (FYILIGFLIMAAIIVMAVLYL).

The protein localises to the cell inner membrane. The chain is Protein YldA from Escherichia coli (strain K12).